The following is a 190-amino-acid chain: NADH-quinone oxidoreductase subunit B (190 aa).

Residues Cys69, Cys70, Cys134, and Cys164 each coordinate [4Fe-4S] cluster.

The protein belongs to the complex I 20 kDa subunit family. As to quaternary structure, NDH-1 is composed of 14 different subunits. Subunits NuoB, C, D, E, F, and G constitute the peripheral sector of the complex. Requires [4Fe-4S] cluster as cofactor.

The protein resides in the cell inner membrane. The enzyme catalyses a quinone + NADH + 5 H(+)(in) = a quinol + NAD(+) + 4 H(+)(out). In terms of biological role, NDH-1 shuttles electrons from NADH, via FMN and iron-sulfur (Fe-S) centers, to quinones in the respiratory chain. Couples the redox reaction to proton translocation (for every two electrons transferred, four hydrogen ions are translocated across the cytoplasmic membrane), and thus conserves the redox energy in a proton gradient. This is NADH-quinone oxidoreductase subunit B from Chelativorans sp. (strain BNC1).